Reading from the N-terminus, the 321-residue chain is Peroxidase 4 (321 aa).

An N-terminal signal peptide occupies residues 1 to 25 (MASSSFSIVVVALGVLALFAGSSSA). At Gln26 the chain carries Pyrrolidone carboxylic acid. Intrachain disulfides connect Cys36-Cys116, Cys69-Cys74, Cys122-Cys317, and Cys201-Cys226. His67 acts as the Proton acceptor in catalysis. Positions 68, 71, 73, 75, and 77 each coordinate Ca(2+). Pro164 serves as a coordination point for substrate. Heme b is bound at residue His194. Residue Thr195 coordinates Ca(2+). The N-linked (GlcNAc...) asparagine glycan is linked to Asn210. The Ca(2+) site is built by Asp241, Thr244, and Asp249.

The protein belongs to the peroxidase family. Classical plant (class III) peroxidase subfamily. The cofactor is heme b. Ca(2+) serves as cofactor.

The protein localises to the secreted. It carries out the reaction 2 a phenolic donor + H2O2 = 2 a phenolic radical donor + 2 H2O. Its function is as follows. Removal of H(2)O(2), oxidation of toxic reductants, biosynthesis and degradation of lignin, suberization, auxin catabolism, response to environmental stresses such as wounding, pathogen attack and oxidative stress. These functions might be dependent on each isozyme/isoform in each plant tissue. The sequence is that of Peroxidase 4 from Vitis vinifera (Grape).